A 259-amino-acid polypeptide reads, in one-letter code: MNVLQTTNLSKTYYSNKGTISYQALSAFDLSVSKGEFVGIMGPSGSGKTTLLNLLATIDKPTQGEMMINGIQPKTLKDQELALFRRRELGFVFQDFNLLDTLTIRENILLPLALDKVKLREMEARLDELADTLQIKHILDHRTYEVSGGQQQRAACARAIIHNPALILADEPTGNLDSKSAKQVMNTLAQLNEEKEATILLVTHDATAASFCKRIVFIKDGRFFSEIHRGTNRQVFYQSILDTLSVLGGDFHEFENYRP.

The 245-residue stretch at 4 to 248 (LQTTNLSKTY…SILDTLSVLG (245 aa)) folds into the ABC transporter domain. Position 42 to 49 (42 to 49 (GPSGSGKT)) interacts with ATP.

Belongs to the ABC transporter superfamily.

This is an uncharacterized protein from Bacillus subtilis (strain 168).